Consider the following 784-residue polypeptide: DNA repair and recombination protein RAD54-like (784 aa).

Positions 1 to 50 are disordered; sequence MRRSLAPSQRGPLRPESRHSFTPPLLKKNKRSCQQELEREQELDRKRQSA. Residues 2–9 are required for chromatin remodeling, strand pairing activities and coupling of ATPase activity; it reads RRSLAPSQ. Ser-20 is subject to Phosphoserine. Residue Thr-22 is modified to Phosphothreonine. Residues 36–47 show a composition bias toward basic and acidic residues; sequence ELEREQELDRKR. One can recognise a Helicase ATP-binding domain in the interval 172–346; sequence EGKRGNFNGC…YSLVNFVNPE (175 aa). 185–192 contributes to the ATP binding site; that stretch reads DEMGLGKT. A DEGH box motif is present at residues 297 to 300; that stretch reads DEGH. The region spanning 503 to 660 is the Helicase C-terminal domain; it reads LLDFMLAAIR…NNESAEKHFT (158 aa). Positions 747–756 are enriched in low complexity; sequence VASAEEAASE. The segment at 747-784 is disordered; sequence VASAEEAASEQPEEKPDRRKRPSTPLSDDSADEDFLGF. The span at 775–784 shows a compositional bias: acidic residues; it reads DSADEDFLGF.

Belongs to the SNF2/RAD54 helicase family. In terms of assembly, interacts (via N-terminus) with spn-A/Rad51.

The protein localises to the nucleus. In terms of biological role, involved in mitotic DNA repair and meiotic recombination. Functions in the recombinational DNA repair pathway. Essential for interhomolog gene conversion (GC), but may have a less important role in intersister GC than spn-A/Rad51. In the presence of DNA, spn-A/Rad51 enhances the ATPase activity of okr/Rad54. The polypeptide is DNA repair and recombination protein RAD54-like (Drosophila erecta (Fruit fly)).